A 390-amino-acid polypeptide reads, in one-letter code: 1-deoxy-D-xylulose 5-phosphate reductoisomerase (390 aa).

The NADPH site is built by T10, G11, S12, I13, G36, R37, N38, and N121. K122 serves as a coordination point for 1-deoxy-D-xylulose 5-phosphate. E123 serves as a coordination point for NADPH. Residue D147 participates in Mn(2+) binding. Residues S148, E149, S173, and H196 each contribute to the 1-deoxy-D-xylulose 5-phosphate site. E149 contacts Mn(2+). G202 is a binding site for NADPH. Residues S209, N214, K215, and E218 each contribute to the 1-deoxy-D-xylulose 5-phosphate site. A Mn(2+)-binding site is contributed by E218. Residues A367–R390 form a disordered region. Residues E370–V380 are compositionally biased toward basic and acidic residues.

It belongs to the DXR family. It depends on Mg(2+) as a cofactor. Mn(2+) serves as cofactor.

The enzyme catalyses 2-C-methyl-D-erythritol 4-phosphate + NADP(+) = 1-deoxy-D-xylulose 5-phosphate + NADPH + H(+). It participates in isoprenoid biosynthesis; isopentenyl diphosphate biosynthesis via DXP pathway; isopentenyl diphosphate from 1-deoxy-D-xylulose 5-phosphate: step 1/6. Catalyzes the NADPH-dependent rearrangement and reduction of 1-deoxy-D-xylulose-5-phosphate (DXP) to 2-C-methyl-D-erythritol 4-phosphate (MEP). The protein is 1-deoxy-D-xylulose 5-phosphate reductoisomerase of Anaeromyxobacter dehalogenans (strain 2CP-1 / ATCC BAA-258).